The following is a 157-amino-acid chain: 2-C-methyl-D-erythritol 2,4-cyclodiphosphate synthase (157 aa).

A divalent metal cation is bound by residues Asp8 and His10. Residues 8 to 10 (DVH) and 34 to 35 (HS) each bind 4-CDP-2-C-methyl-D-erythritol 2-phosphate. His42 contacts a divalent metal cation. 4-CDP-2-C-methyl-D-erythritol 2-phosphate-binding positions include 56 to 58 (DIG), 61 to 65 (FPDTD), 100 to 106 (AQAPKMA), 132 to 135 (TTTE), Phe139, and Arg142.

The protein belongs to the IspF family. As to quaternary structure, homotrimer. The cofactor is a divalent metal cation.

The catalysed reaction is 4-CDP-2-C-methyl-D-erythritol 2-phosphate = 2-C-methyl-D-erythritol 2,4-cyclic diphosphate + CMP. Its pathway is isoprenoid biosynthesis; isopentenyl diphosphate biosynthesis via DXP pathway; isopentenyl diphosphate from 1-deoxy-D-xylulose 5-phosphate: step 4/6. Functionally, involved in the biosynthesis of isopentenyl diphosphate (IPP) and dimethylallyl diphosphate (DMAPP), two major building blocks of isoprenoid compounds. Catalyzes the conversion of 4-diphosphocytidyl-2-C-methyl-D-erythritol 2-phosphate (CDP-ME2P) to 2-C-methyl-D-erythritol 2,4-cyclodiphosphate (ME-CPP) with a corresponding release of cytidine 5-monophosphate (CMP). This is 2-C-methyl-D-erythritol 2,4-cyclodiphosphate synthase from Pseudomonas aeruginosa (strain ATCC 15692 / DSM 22644 / CIP 104116 / JCM 14847 / LMG 12228 / 1C / PRS 101 / PAO1).